The following is a 994-amino-acid chain: Tyrosine-protein kinase Mer (994 aa).

An N-terminal signal peptide occupies residues 1 to 18; it reads MVLAPLLLGLLLLPALWS. At 19–497 the chain is on the extracellular side; the sequence is GGTAEKWEET…TPAPGNTDSM (479 aa). A disordered region spans residues 44–78; the sequence is VNHRPFSAPHSSRDQLPPPQTGRSHPAHTAAPQVT. Ig-like C2-type domains follow at residues 75-181 and 192-268; these read PQVT…EIVS and PYFI…LTVS. 15 N-linked (GlcNAc...) asparagine glycosylation sites follow: Asn91, Asn108, Asn165, Asn202, Asn210, Asn229, Asn289, Asn311, Asn324, Asn331, Asn349, Asn384, Asn390, Asn437, and Asn449. A disulfide bridge connects residues Cys109 and Cys170. Cys213 and Cys257 form a disulfide bridge. 2 consecutive Fibronectin type-III domains span residues 281 to 376 and 381 to 478; these read PPTE…TTEG and APLN…IPEH. A helical transmembrane segment spans residues 498–518; sequence FIILGCFCGFILIGLILCISL. The Cytoplasmic portion of the chain corresponds to 519–994; that stretch reads ALRRRVQETK…DSLEDSEVLM (476 aa). At Ser538 the chain carries Phosphoserine. The Protein kinase domain occupies 582–852; sequence LVLGKVLGEG…SVLRLQLEKL (271 aa). Residues 588–596 and Lys610 each bind ATP; that span reads LGEGEFGSV. Catalysis depends on Asp718, which acts as the Proton acceptor. Phosphotyrosine; by autocatalysis is present on residues Tyr744, Tyr748, Tyr749, and Tyr867.

This sequence belongs to the protein kinase superfamily. Tyr protein kinase family. AXL/UFO subfamily. Interacts (upon activation) with TNK2; stimulates TNK2 autophosphorylation. Interacts (via N-terminus) with extracellular ligands LGALS3, TUB, TULP1 and GAS6. Interacts with VAV1 in a phosphotyrosine-independent manner. Interacts with TIMD4; this interaction enhances TIMD4-mediated efferocytosis. Post-translationally, autophosphorylated on Tyr-744, Tyr-748 and Tyr-749 in the activation loop allowing full activity. Autophosphorylated on Tyr-867 leading to recruitment of downstream partners of the signaling cascade such as PLCG2. In terms of tissue distribution, expressed predominantly in the hematopoietic lineages: macrophages, NK cells, NKT cells, dendritic cells and platelets.

Its subcellular location is the cell membrane. It carries out the reaction L-tyrosyl-[protein] + ATP = O-phospho-L-tyrosyl-[protein] + ADP + H(+). In terms of biological role, receptor tyrosine kinase that transduces signals from the extracellular matrix into the cytoplasm by binding to several ligands including LGALS3, TUB, TULP1 or GAS6. Regulates many physiological processes including cell survival, migration, differentiation, and phagocytosis of apoptotic cells (efferocytosis). Ligand binding at the cell surface induces autophosphorylation of MERTK on its intracellular domain that provides docking sites for downstream signaling molecules. Following activation by ligand, interacts with GRB2 or PLCG2 and induces phosphorylation of MAPK1, MAPK2, FAK/PTK2 or RAC1. MERTK signaling plays a role in various processes such as macrophage clearance of apoptotic cells, platelet aggregation, cytoskeleton reorganization and engulfment. Functions in the retinal pigment epithelium (RPE) as a regulator of rod outer segments fragments phagocytosis. Also plays an important role in inhibition of Toll-like receptors (TLRs)-mediated innate immune response by activating STAT1, which selectively induces production of suppressors of cytokine signaling SOCS1 and SOCS3. The sequence is that of Tyrosine-protein kinase Mer (Mertk) from Mus musculus (Mouse).